The chain runs to 352 residues: Nicotinate-nucleotide--dimethylbenzimidazole phosphoribosyltransferase (352 aa).

Residue Glu-316 is the Proton acceptor of the active site.

This sequence belongs to the CobT family.

The catalysed reaction is 5,6-dimethylbenzimidazole + nicotinate beta-D-ribonucleotide = alpha-ribazole 5'-phosphate + nicotinate + H(+). It participates in nucleoside biosynthesis; alpha-ribazole biosynthesis; alpha-ribazole from 5,6-dimethylbenzimidazole: step 1/2. Catalyzes the synthesis of alpha-ribazole-5'-phosphate from nicotinate mononucleotide (NAMN) and 5,6-dimethylbenzimidazole (DMB). The sequence is that of Nicotinate-nucleotide--dimethylbenzimidazole phosphoribosyltransferase from Ruminiclostridium cellulolyticum (strain ATCC 35319 / DSM 5812 / JCM 6584 / H10) (Clostridium cellulolyticum).